A 92-amino-acid polypeptide reads, in one-letter code: Large ribosomal subunit protein bL31 (92 aa).

Belongs to the bacterial ribosomal protein bL31 family. Type A subfamily. Part of the 50S ribosomal subunit.

In terms of biological role, binds the 23S rRNA. The chain is Large ribosomal subunit protein bL31 from Mesoplasma florum (strain ATCC 33453 / NBRC 100688 / NCTC 11704 / L1) (Acholeplasma florum).